A 526-amino-acid polypeptide reads, in one-letter code: Peptide chain release factor 3 (526 aa).

Residues 9 to 277 (DKRRTFAIIS…GIVEWAPKPL (269 aa)) enclose the tr-type G domain. GTP is bound by residues 18–25 (SHPDAGKT), 86–90 (DTPGH), and 140–143 (NKLD).

The protein belongs to the TRAFAC class translation factor GTPase superfamily. Classic translation factor GTPase family. PrfC subfamily.

It is found in the cytoplasm. Functionally, increases the formation of ribosomal termination complexes and stimulates activities of RF-1 and RF-2. It binds guanine nucleotides and has strong preference for UGA stop codons. It may interact directly with the ribosome. The stimulation of RF-1 and RF-2 is significantly reduced by GTP and GDP, but not by GMP. The polypeptide is Peptide chain release factor 3 (Shewanella putrefaciens (strain CN-32 / ATCC BAA-453)).